Reading from the N-terminus, the 419-residue chain is Inward rectifier potassium channel 16 (419 aa).

Residues 1–67 lie on the Cytoplasmic side of the membrane; that stretch reads MSYYGSSYRI…MVDIFTTLVD (67 aa). Residues 68–94 form a helical membrane-spanning segment; it reads TKWRHMFVIFSLSYILSWLIFGSIFWL. The Extracellular portion of the chain corresponds to 95 to 117; sequence IAFHHGDLLSDPDITPCVDNVHS. Positions 118 to 134 form an intramembrane region, helical; Pore-forming; it reads FTAAFLFSLETQTTIGY. Positions 131–136 match the Selectivity filter motif; sequence TIGYGY. At 135 to 143 the chain is on the extracellular side; it reads GYRCVTEEC. Residues 144–171 traverse the membrane as a helical segment; it reads SVAVLTVILQSILSCIINTFIIGAALAK. Residues 172 to 419 are Cytoplasmic-facing; it reads MATARKRAQT…LNRISMESQM (248 aa). Serine 358, serine 374, and serine 376 each carry phosphoserine.

Belongs to the inward rectifier-type potassium channel (TC 1.A.2.1) family. KCNJ16 subfamily. It forms heteromeric channels with Kir4.1/KCNJ10; this interaction is required for KCNJ16 localization to the basolateral membrane in kidney cells. As a heteromer with KCNJ10, may interact with MAGI1; this interaction may facilitate KCNJ10/KCNJ16 potassium channel expression at the basolateral membrane in kidney cells. May form heteromers with Kir2.1/KCNJ2. Can form heteromeric channels with Kir4.2/KCNJ15. Abundantly expressed in the proximal and distal segments of the nephron.

Its subcellular location is the membrane. The protein resides in the basolateral cell membrane. The catalysed reaction is K(+)(in) = K(+)(out). Channel activity is strongly regulated by variations of cytosolic pH; channels are activated by alkaline and inhibited by acidic pH values. Activated by phosphatidylinositol 4,5 biphosphate (PtdIns(4,5)P2). Inward rectifier potassium channels are characterized by a greater tendency to allow potassium to flow into the cell rather than out of it. Their voltage dependence is regulated by the concentration of extracellular potassium; as external potassium is raised, the voltage range of the channel opening shifts to more positive voltages. The inward rectification is mainly due to the blockage of outward current by internal magnesium. KCNJ16 may be involved in the regulation of fluid and pH balance. In the kidney, together with KCNJ10, mediates basolateral K(+) recycling in distal tubules; this process is critical for Na(+) reabsorption at the tubules. The polypeptide is Inward rectifier potassium channel 16 (Kcnj16) (Mus musculus (Mouse)).